The primary structure comprises 105 residues: MICOS complex subunit Mic10 (105 aa).

The chain crosses the membrane as a helical span at residues Leu29–Phe46. Residues Phe47–Gln105 are Mitochondrial intermembrane-facing. Residues Pro85 to Gln105 form a disordered region.

Belongs to the MICOS complex subunit Mic10 family. Component of the mitochondrial contact site and cristae organizing system (MICOS) complex.

It is found in the mitochondrion inner membrane. In terms of biological role, component of the MICOS complex, a large protein complex of the mitochondrial inner membrane that plays crucial roles in the maintenance of crista junctions, inner membrane architecture, and formation of contact sites to the outer membrane. The polypeptide is MICOS complex subunit Mic10 (Caenorhabditis elegans).